The chain runs to 196 residues: Ribonuclease HII (196 aa).

The 188-residue stretch at 9-196 (KLVAGVDEVG…KPVRHALGIE (188 aa)) folds into the RNase H type-2 domain. A divalent metal cation is bound by residues D15, E16, and D107.

It belongs to the RNase HII family. The cofactor is Mn(2+). It depends on Mg(2+) as a cofactor.

The protein resides in the cytoplasm. The enzyme catalyses Endonucleolytic cleavage to 5'-phosphomonoester.. Functionally, endonuclease that specifically degrades the RNA of RNA-DNA hybrids. This Aeromonas salmonicida (strain A449) protein is Ribonuclease HII.